Here is a 202-residue protein sequence, read N- to C-terminus: LexA repressor (202 aa).

Positions 28–48 (RAEIAQRLGFRSPNAAEEHLK) form a DNA-binding region, H-T-H motif. Residues Ser-119 and Lys-156 each act as for autocatalytic cleavage activity in the active site.

The protein belongs to the peptidase S24 family. In terms of assembly, homodimer.

It catalyses the reaction Hydrolysis of Ala-|-Gly bond in repressor LexA.. Its function is as follows. Represses a number of genes involved in the response to DNA damage (SOS response), including recA and lexA. Binds to the 16 bp palindromic sequence 5'-CTGTATATATATACAG-3'. In the presence of single-stranded DNA, RecA interacts with LexA causing an autocatalytic cleavage which disrupts the DNA-binding part of LexA, leading to derepression of the SOS regulon and eventually DNA repair. The polypeptide is LexA repressor (Klebsiella pneumoniae (strain 342)).